A 389-amino-acid chain; its full sequence is 2-deoxystreptamine N-acetyl-D-glucosaminyltransferase (389 aa).

This sequence belongs to the glycosyltransferase group 1 family.

It catalyses the reaction 2-deoxystreptamine + UDP-N-acetyl-alpha-D-glucosamine = 2'-N-acetylparomamine + UDP + H(+). It participates in antibiotic biosynthesis; butirosin biosynthesis. Glycosyltransferase involved in the biosynthesis of butirosin by mediating conversion of 2-deoxystreptamine (2-DOS) to 2'-N-acetylparomamine using UDP-alpha-D-glucosamine as sugar donor. The chain is 2-deoxystreptamine N-acetyl-D-glucosaminyltransferase (btrM) from Niallia circulans (Bacillus circulans).